The sequence spans 124 residues: UPF0102 protein HEAR0176 (124 aa).

The protein belongs to the UPF0102 family.

In Herminiimonas arsenicoxydans, this protein is UPF0102 protein HEAR0176.